Reading from the N-terminus, the 434-residue chain is 3-phosphoshikimate 1-carboxyvinyltransferase (434 aa).

The 3-phosphoshikimate site is built by lysine 22, serine 23, and arginine 27. Lysine 22 lines the phosphoenolpyruvate pocket. The phosphoenolpyruvate site is built by glycine 93 and arginine 121. 3-phosphoshikimate is bound by residues serine 168, serine 169, glutamine 170, serine 199, aspartate 320, and lysine 347. Glutamine 170 is a binding site for phosphoenolpyruvate. The active-site Proton acceptor is the aspartate 320. Positions 351, 394, and 419 each coordinate phosphoenolpyruvate.

It belongs to the EPSP synthase family. As to quaternary structure, monomer.

The protein localises to the cytoplasm. It carries out the reaction 3-phosphoshikimate + phosphoenolpyruvate = 5-O-(1-carboxyvinyl)-3-phosphoshikimate + phosphate. Its pathway is metabolic intermediate biosynthesis; chorismate biosynthesis; chorismate from D-erythrose 4-phosphate and phosphoenolpyruvate: step 6/7. Catalyzes the transfer of the enolpyruvyl moiety of phosphoenolpyruvate (PEP) to the 5-hydroxyl of shikimate-3-phosphate (S3P) to produce enolpyruvyl shikimate-3-phosphate and inorganic phosphate. The polypeptide is 3-phosphoshikimate 1-carboxyvinyltransferase (Paraburkholderia phytofirmans (strain DSM 17436 / LMG 22146 / PsJN) (Burkholderia phytofirmans)).